The sequence spans 358 residues: Histidinol-phosphate aminotransferase (358 aa).

The residue at position 218 (K218) is an N6-(pyridoxal phosphate)lysine.

The protein belongs to the class-II pyridoxal-phosphate-dependent aminotransferase family. Histidinol-phosphate aminotransferase subfamily. Homodimer. Requires pyridoxal 5'-phosphate as cofactor.

It carries out the reaction L-histidinol phosphate + 2-oxoglutarate = 3-(imidazol-4-yl)-2-oxopropyl phosphate + L-glutamate. The protein operates within amino-acid biosynthesis; L-histidine biosynthesis; L-histidine from 5-phospho-alpha-D-ribose 1-diphosphate: step 7/9. This Dehalococcoides mccartyi (strain ATCC BAA-2100 / JCM 16839 / KCTC 5957 / BAV1) protein is Histidinol-phosphate aminotransferase.